The following is a 193-amino-acid chain: Orotate phosphoribosyltransferase (193 aa).

5-phospho-alpha-D-ribose 1-diphosphate is bound by residues Arg85, Lys89, His91, and 111–119; that span reads DDVLTTGKS. 2 residues coordinate orotate: Thr115 and Arg143.

The protein belongs to the purine/pyrimidine phosphoribosyltransferase family. PyrE subfamily. In terms of assembly, homodimer. The cofactor is Mg(2+).

The enzyme catalyses orotidine 5'-phosphate + diphosphate = orotate + 5-phospho-alpha-D-ribose 1-diphosphate. It functions in the pathway pyrimidine metabolism; UMP biosynthesis via de novo pathway; UMP from orotate: step 1/2. In terms of biological role, catalyzes the transfer of a ribosyl phosphate group from 5-phosphoribose 1-diphosphate to orotate, leading to the formation of orotidine monophosphate (OMP). This chain is Orotate phosphoribosyltransferase, found in Pyrobaculum islandicum (strain DSM 4184 / JCM 9189 / GEO3).